We begin with the raw amino-acid sequence, 595 residues long: Aspartate--tRNA(Asp/Asn) ligase (595 aa).

An L-aspartate-binding site is contributed by E178. Positions 202–205 are aspartate; it reads QLFK. Residue R224 participates in L-aspartate binding. Residues 224-226 and Q233 contribute to the ATP site; that span reads RDE. H458 is a binding site for L-aspartate. E488 contacts ATP. Residue R495 coordinates L-aspartate. 540-543 contacts ATP; the sequence is GLDR.

It belongs to the class-II aminoacyl-tRNA synthetase family. Type 1 subfamily. In terms of assembly, homodimer.

It localises to the cytoplasm. The enzyme catalyses tRNA(Asx) + L-aspartate + ATP = L-aspartyl-tRNA(Asx) + AMP + diphosphate. Aspartyl-tRNA synthetase with relaxed tRNA specificity since it is able to aspartylate not only its cognate tRNA(Asp) but also tRNA(Asn). Reaction proceeds in two steps: L-aspartate is first activated by ATP to form Asp-AMP and then transferred to the acceptor end of tRNA(Asp/Asn). In Trichodesmium erythraeum (strain IMS101), this protein is Aspartate--tRNA(Asp/Asn) ligase.